A 48-amino-acid chain; its full sequence is Large ribosomal subunit protein bL32 (48 aa).

The disordered stretch occupies residues 24–48 (LPMPIKDKDGSYKMPHRVNPVTKEY).

It belongs to the bacterial ribosomal protein bL32 family.

The protein is Large ribosomal subunit protein bL32 of Campylobacter lari (strain RM2100 / D67 / ATCC BAA-1060).